Reading from the N-terminus, the 516-residue chain is uncharacterized protein (516 aa).

5 helical membrane passes run Ile-10 to Ile-27, Ile-32 to Ala-54, Ser-64 to Val-83, Leu-95 to Leu-117, and Ala-165 to Leu-187. RCK C-terminal domains lie at Lys-208–Glu-291 and Arg-296–Val-376. 4 helical membrane passes run Phe-386 to Gly-408, Ile-412 to Leu-430, Gly-443 to Gly-465, and Leu-480 to Leu-502.

The protein belongs to the AAE transporter (TC 2.A.81) family.

It localises to the cell membrane. This is an uncharacterized protein from Bradyrhizobium diazoefficiens (strain JCM 10833 / BCRC 13528 / IAM 13628 / NBRC 14792 / USDA 110).